The following is a 482-amino-acid chain: Cardiolipin synthase (482 aa).

A run of 2 helical transmembrane segments spans residues 4–24 and 34–54; these read LAYLLVVLLILNVFFAAVTVF and WAWLLVLTFVPIFGFIIYLIF. 2 consecutive PLD phosphodiesterase domains span residues 217–244 and 395–422; these read LNYRNHRKLAIIDGDISYIGGFNIGDEY and DNGFIHAKTLVVDGEIASVGTANMDFRS. Catalysis depends on residues His222, Lys224, Asp229, His400, Lys402, and Asp407.

The protein belongs to the phospholipase D family. Cardiolipin synthase subfamily.

The protein resides in the cell membrane. The enzyme catalyses 2 a 1,2-diacyl-sn-glycero-3-phospho-(1'-sn-glycerol) = a cardiolipin + glycerol. In terms of biological role, catalyzes the reversible phosphatidyl group transfer from one phosphatidylglycerol molecule to another to form cardiolipin (CL) (diphosphatidylglycerol) and glycerol. This Listeria welshimeri serovar 6b (strain ATCC 35897 / DSM 20650 / CCUG 15529 / CIP 8149 / NCTC 11857 / SLCC 5334 / V8) protein is Cardiolipin synthase (cls).